We begin with the raw amino-acid sequence, 288 residues long: Elongation factor Ts (288 aa).

The segment at T82–V85 is involved in Mg(2+) ion dislocation from EF-Tu.

Belongs to the EF-Ts family.

The protein localises to the cytoplasm. Associates with the EF-Tu.GDP complex and induces the exchange of GDP to GTP. It remains bound to the aminoacyl-tRNA.EF-Tu.GTP complex up to the GTP hydrolysis stage on the ribosome. In Pelodictyon phaeoclathratiforme (strain DSM 5477 / BU-1), this protein is Elongation factor Ts.